The chain runs to 362 residues: Dihydroorotate dehydrogenase (quinone) (362 aa).

Residues 62–66 (AGYDK) and Thr-86 contribute to the FMN site. Substrate is bound at residue Lys-66. 111 to 115 (NRLGF) contributes to the substrate binding site. Residues Asn-139 and Asn-170 each contribute to the FMN site. Asn-170 serves as a coordination point for substrate. Ser-173 (nucleophile) is an active-site residue. Asn-175 is a binding site for substrate. The FMN site is built by Lys-215 and Ser-243. Substrate is bound at residue 244–245 (NT). FMN contacts are provided by residues Gly-266, Gly-295, and 316–317 (YS).

The protein belongs to the dihydroorotate dehydrogenase family. Type 2 subfamily. As to quaternary structure, monomer. FMN is required as a cofactor.

The protein resides in the cell membrane. The enzyme catalyses (S)-dihydroorotate + a quinone = orotate + a quinol. Its pathway is pyrimidine metabolism; UMP biosynthesis via de novo pathway; orotate from (S)-dihydroorotate (quinone route): step 1/1. Its function is as follows. Catalyzes the conversion of dihydroorotate to orotate with quinone as electron acceptor. In Rhizobium leguminosarum bv. trifolii (strain WSM2304), this protein is Dihydroorotate dehydrogenase (quinone).